We begin with the raw amino-acid sequence, 448 residues long: Probable glycine dehydrogenase (decarboxylating) subunit 1 (448 aa).

Belongs to the GcvP family. N-terminal subunit subfamily. As to quaternary structure, the glycine cleavage system is composed of four proteins: P, T, L and H. In this organism, the P 'protein' is a heterodimer of two subunits.

The catalysed reaction is N(6)-[(R)-lipoyl]-L-lysyl-[glycine-cleavage complex H protein] + glycine + H(+) = N(6)-[(R)-S(8)-aminomethyldihydrolipoyl]-L-lysyl-[glycine-cleavage complex H protein] + CO2. In terms of biological role, the glycine cleavage system catalyzes the degradation of glycine. The P protein binds the alpha-amino group of glycine through its pyridoxal phosphate cofactor; CO(2) is released and the remaining methylamine moiety is then transferred to the lipoamide cofactor of the H protein. The protein is Probable glycine dehydrogenase (decarboxylating) subunit 1 of Anoxybacillus flavithermus (strain DSM 21510 / WK1).